A 121-amino-acid chain; its full sequence is Protein FAM241B (121 aa).

Residues 12 to 58 (QDDDPRVRTTTQPPRGSIPRQSFFNRGHGAPPGGPGPRQQQAGARLG) are disordered. Residues 19 to 35 (RTTTQPPRGSIPRQSFF) are compositionally biased toward polar residues. A Phosphoserine modification is found at serine 33. The segment covering 48–58 (PRQQQAGARLG) has biased composition (low complexity). Serine 62 is subject to Phosphoserine. Residues 92–112 (ILLLFLLMMLGVRGLLLVGLV) form a helical membrane-spanning segment.

This sequence belongs to the FAM241 family.

The protein localises to the membrane. In terms of biological role, may play a role in lysosome homeostasis. In Homo sapiens (Human), this protein is Protein FAM241B.